The chain runs to 625 residues: Autophagy-related protein 13b (625 aa).

Low complexity-rich tracts occupy residues Pro322–Arg332 and Pro455–Ser477. Disordered stretches follow at residues Pro322–Arg388, Phe452–Lys527, and Pro544–Lys564. Over residues Ile498–Phe518 the composition is skewed to basic and acidic residues.

This sequence belongs to the ATG13 family. Plant subfamily.

Its subcellular location is the cytoplasmic vesicle. The protein resides in the autophagosome. Functionally, involved in autophagy in a nutritional condition dependent manner. The ATG1-ATG13 protein kinase complex regulates downstream events required for autophagosome enclosure and/or vacuolar delivery. Becomes a target of autophagy under nutrient starvation. Connects autophagy to plant nutritional status. In Arabidopsis thaliana (Mouse-ear cress), this protein is Autophagy-related protein 13b.